We begin with the raw amino-acid sequence, 302 residues long: Heme A synthase (302 aa).

At 1-8 (MFRKQNLK) the chain is on the cytoplasmic side. Residues 9–29 (WLGVLATIIMTFVQLGGALVT) traverse the membrane as a helical segment. Over 30 to 67 (KTGSEDGCGSSWPLCNGALLPENLPIQTIIELSHRAVS) the chain is Extracellular. Cysteine 37 and cysteine 44 form a disulfide bridge. Residue glutamate 60 is part of the active site. Histidine 63 is a binding site for heme o. A helical transmembrane segment spans residues 68–88 (AISLIVVLWLVITAWKNIGYI). Residues 89–93 (KEIKP) lie on the Cytoplasmic side of the membrane. Residues 94–114 (LSIISVGFLLVQALVGAAAVI) traverse the membrane as a helical segment. The Extracellular segment spans residues 115-125 (WQQNPYVLALH). Histidine 125 is a heme o binding site. The helical transmembrane segment at 126 to 146 (FGISLISFSSVFLMTLIIFSI) threads the bilayer. The Cytoplasmic segment spans residues 147–161 (DKKYEADILFIHKPL). The helical transmembrane segment at 162-182 (RILTWLMAIIVYLTIYTGALV) threads the bilayer. Topologically, residues 183 to 215 (RHTKSSLAYGAWPIPFDDIVPHNAHDWVQFSHR) are extracellular. Histidine 214 is a binding site for heme b. The chain crosses the membrane as a helical span at residues 216-236 (GMAFITFIWIMITFIHAIKNY). Residues 237–244 (SDNRTVRY) lie on the Cytoplasmic side of the membrane. Residues 245 to 265 (GYTASFILVILQVITGALSVI) form a helical membrane-spanning segment. The Extracellular segment spans residues 266–270 (TNVNL). The helical transmembrane segment at 271–291 (IIALFHALFITYLFGMIAYFI) threads the bilayer. Residue histidine 276 coordinates heme b. The Cytoplasmic segment spans residues 292-302 (LLMLRTTRSLK).

The protein belongs to the COX15/CtaA family. Type 1 subfamily. In terms of assembly, interacts with CtaB. It depends on heme b as a cofactor.

It localises to the cell membrane. It catalyses the reaction Fe(II)-heme o + 2 A + H2O = Fe(II)-heme a + 2 AH2. The protein operates within porphyrin-containing compound metabolism; heme A biosynthesis; heme A from heme O: step 1/1. In terms of biological role, catalyzes the conversion of heme O to heme A by two successive hydroxylations of the methyl group at C8. The first hydroxylation forms heme I, the second hydroxylation results in an unstable dihydroxymethyl group, which spontaneously dehydrates, resulting in the formyl group of heme A. This Staphylococcus epidermidis (strain ATCC 12228 / FDA PCI 1200) protein is Heme A synthase.